The sequence spans 228 residues: Flavin-dependent thymidylate synthase (228 aa).

In terms of domain architecture, ThyX spans 1–217 (MEYKILDKGF…PWTFEAFLKF (217 aa)). FAD contacts are provided by residues threonine 55, 78 to 80 (RHR), and glutamate 86. DUMP contacts are provided by residues 75–78 (QWFR), 86–90 (EASLR), and arginine 156. Positions 78–88 (RHRIGSFNEAS) match the ThyX motif motif. Residues 172–174 (NAR) and asparagine 178 contribute to the FAD site. A dUMP-binding site is contributed by arginine 183. Arginine 183 serves as the catalytic Involved in ionization of N3 of dUMP, leading to its activation.

It belongs to the thymidylate synthase ThyX family. In terms of assembly, homotetramer. Requires FAD as cofactor.

It carries out the reaction dUMP + (6R)-5,10-methylene-5,6,7,8-tetrahydrofolate + NADPH + H(+) = dTMP + (6S)-5,6,7,8-tetrahydrofolate + NADP(+). The protein operates within pyrimidine metabolism; dTTP biosynthesis. Functionally, catalyzes the reductive methylation of 2'-deoxyuridine-5'-monophosphate (dUMP) to 2'-deoxythymidine-5'-monophosphate (dTMP) while utilizing 5,10-methylenetetrahydrofolate (mTHF) as the methyl donor, and NADPH and FADH(2) as the reductant. This is Flavin-dependent thymidylate synthase from Thermosipho africanus (strain TCF52B).